The following is a 182-amino-acid chain: Ribosome-recycling factor (182 aa).

The protein belongs to the RRF family.

It is found in the cytoplasm. Its function is as follows. Responsible for the release of ribosomes from messenger RNA at the termination of protein biosynthesis. May increase the efficiency of translation by recycling ribosomes from one round of translation to another. In Synechococcus sp. (strain JA-2-3B'a(2-13)) (Cyanobacteria bacterium Yellowstone B-Prime), this protein is Ribosome-recycling factor.